The following is a 307-amino-acid chain: L-carnitine dehydrogenase (307 aa).

NAD(+) is bound at residue 8 to 13; that stretch reads GTGVIG.

The protein belongs to the 3-hydroxyacyl-CoA dehydrogenase family. L-carnitine dehydrogenase subfamily. In terms of assembly, homodimer.

It localises to the cytoplasm. It carries out the reaction carnitine + NAD(+) = 3-dehydrocarnitine + NADH + H(+). The protein operates within amine and polyamine metabolism; carnitine metabolism. Functionally, catalyzes the NAD(+)-dependent oxidation of L-carnitine to 3-dehydrocarnitine. This chain is L-carnitine dehydrogenase, found in Oceanobacillus iheyensis (strain DSM 14371 / CIP 107618 / JCM 11309 / KCTC 3954 / HTE831).